We begin with the raw amino-acid sequence, 142 residues long: Cytochrome c-type biogenesis protein CcmE (142 aa).

Over 1–2 (MK) the chain is Cytoplasmic. The helical; Signal-anchor for type II membrane protein transmembrane segment at 3–23 (GKYLLGILVILGALGYMVFGG) threads the bilayer. Residues 24 to 142 (LGRNLVYFLT…EVRKLIEEAQ (119 aa)) are Periplasmic-facing. Heme-binding residues include His-118 and Tyr-122.

The protein belongs to the CcmE/CycJ family.

It localises to the cell inner membrane. In terms of biological role, heme chaperone required for the biogenesis of c-type cytochromes. Transiently binds heme delivered by CcmC and transfers the heme to apo-cytochromes in a process facilitated by CcmF and CcmH. The protein is Cytochrome c-type biogenesis protein CcmE of Thermus thermophilus (strain ATCC BAA-163 / DSM 7039 / HB27).